Reading from the N-terminus, the 78-residue chain is ATP synthase subunit c (78 aa).

2 helical membrane passes run phenylalanine 11 to valine 31 and leucine 53 to leucine 73.

It belongs to the ATPase C chain family. As to quaternary structure, F-type ATPases have 2 components, F(1) - the catalytic core - and F(0) - the membrane proton channel. F(1) has five subunits: alpha(3), beta(3), gamma(1), delta(1), epsilon(1). F(0) has four main subunits: a(1), b(1), b'(1) and c(10-14). The alpha and beta chains form an alternating ring which encloses part of the gamma chain. F(1) is attached to F(0) by a central stalk formed by the gamma and epsilon chains, while a peripheral stalk is formed by the delta, b and b' chains.

Its subcellular location is the cell inner membrane. F(1)F(0) ATP synthase produces ATP from ADP in the presence of a proton or sodium gradient. F-type ATPases consist of two structural domains, F(1) containing the extramembraneous catalytic core and F(0) containing the membrane proton channel, linked together by a central stalk and a peripheral stalk. During catalysis, ATP synthesis in the catalytic domain of F(1) is coupled via a rotary mechanism of the central stalk subunits to proton translocation. In terms of biological role, key component of the F(0) channel; it plays a direct role in translocation across the membrane. A homomeric c-ring of between 10-14 subunits forms the central stalk rotor element with the F(1) delta and epsilon subunits. This chain is ATP synthase subunit c, found in Cereibacter sphaeroides (strain ATCC 17025 / ATH 2.4.3) (Rhodobacter sphaeroides).